Here is a 340-residue protein sequence, read N- to C-terminus: Ketol-acid reductoisomerase (NADP(+)) (340 aa).

Residues 1 to 183 enclose the KARI N-terminal Rossmann domain; the sequence is MAITVYYDKD…GGGRTGIIET (183 aa). NADP(+)-binding positions include 26–29, Ser-54, and 84–87; these read FGSQ and DEFQ. His-109 is a catalytic residue. Position 135 (Gly-135) interacts with NADP(+). The KARI C-terminal knotted domain occupies 184–329; that stretch reads TFKAETETDL…EKLRGMMPWI (146 aa). Residues Asp-192, Glu-196, Glu-228, and Glu-232 each contribute to the Mg(2+) site. Substrate is bound at residue Ser-253.

The protein belongs to the ketol-acid reductoisomerase family. Mg(2+) is required as a cofactor.

The catalysed reaction is (2R)-2,3-dihydroxy-3-methylbutanoate + NADP(+) = (2S)-2-acetolactate + NADPH + H(+). It catalyses the reaction (2R,3R)-2,3-dihydroxy-3-methylpentanoate + NADP(+) = (S)-2-ethyl-2-hydroxy-3-oxobutanoate + NADPH + H(+). It participates in amino-acid biosynthesis; L-isoleucine biosynthesis; L-isoleucine from 2-oxobutanoate: step 2/4. Its pathway is amino-acid biosynthesis; L-valine biosynthesis; L-valine from pyruvate: step 2/4. Involved in the biosynthesis of branched-chain amino acids (BCAA). Catalyzes an alkyl-migration followed by a ketol-acid reduction of (S)-2-acetolactate (S2AL) to yield (R)-2,3-dihydroxy-isovalerate. In the isomerase reaction, S2AL is rearranged via a Mg-dependent methyl migration to produce 3-hydroxy-3-methyl-2-ketobutyrate (HMKB). In the reductase reaction, this 2-ketoacid undergoes a metal-dependent reduction by NADPH to yield (R)-2,3-dihydroxy-isovalerate. This chain is Ketol-acid reductoisomerase (NADP(+)), found in Campylobacter fetus subsp. fetus (strain 82-40).